Reading from the N-terminus, the 290-residue chain is Nucleotide-binding protein BPP4038 (290 aa).

Residue 9–16 (GISGSGKS) participates in ATP binding. A GTP-binding site is contributed by 58–61 (DVRS).

Belongs to the RapZ-like family.

Displays ATPase and GTPase activities. The polypeptide is Nucleotide-binding protein BPP4038 (Bordetella parapertussis (strain 12822 / ATCC BAA-587 / NCTC 13253)).